The primary structure comprises 923 residues: TBC1 domain family member 2A (923 aa).

M1 carries the post-translational modification N-acetylmethionine. Residues 1–39 (MDGAHENAAESSSSVPRSEEPACSAGGPEVLPPEESEGC) are disordered. Positions 1-171 (MDGAHENAAE…AGNGPTLRLE (171 aa)) are interaction with CADH1. The 98-residue stretch at 47-144 (PKKLCGYLSK…WLQQLQTKRW (98 aa)) folds into the PH domain. 2 disordered regions span residues 146-166 (FHSSPPAPPAAPDAAPAGNGP) and 232-289 (RQAQ…LIQK). Residues 301 to 439 (AEGLTRTRTA…KVTWDFTHPP (139 aa)) are interaction with RAC1. Positions 308–486 (RTAQEKILAL…LNSEIHQVTK (179 aa)) form a coiled coil. Positions 631–823 (GVPREHRPRV…RVWDAFLYEG (193 aa)) constitute a Rab-GAP TBC domain. The stretch at 870–904 (MKQLRQLRRAHRERLEAELHELEQLKAEYLETQSS) forms a coiled coil. The interval 900–923 (ETQSSRGPAVPDGCTSEDEGEGEA) is disordered. Residues 914–923 (TSEDEGEGEA) are compositionally biased toward acidic residues. Phosphoserine is present on S915.

Interacts with activated RAC1 and CDH1.

The protein localises to the cytoplasm. It is found in the cytoplasmic vesicle. Its subcellular location is the cell junction. Its function is as follows. Acts as a GTPase-activating protein for RAB7A. Signal effector acting as a linker between RAC1 and RAB7A, leading to RAB7A inactivation and subsequent inhibition of cadherin degradation and reduced cell-cell adhesion. This chain is TBC1 domain family member 2A (TBC1D2), found in Ailuropoda melanoleuca (Giant panda).